The chain runs to 508 residues: Amphoterin-induced protein 3 (508 aa).

The first 19 residues, 1–19 (MAWLVLSGILLCMLGAGLG), serve as a signal peptide directing secretion. At 20 to 383 (TSDLEDVLPP…ARPEPETFNT (364 aa)) the chain is on the extracellular side. The LRRNT domain occupies 25–61 (DVLPPAPHNCPDICICAADVLSCAGRGLQDLPVALPT). Disulfide bonds link Cys-34-Cys-40 and Cys-38-Cys-47. 6 LRR repeats span residues 62 to 83 (TAAELDLSHNALKRLHPGWLAP), 86 to 107 (RLRALHLGYNKLEVLGHGAFTN), 110 to 133 (GLRTLDLSSNMLRMLHTHDLDGLE), 134 to 155 (ELEKLLLFNNSLMHLDLDAFQG), 158 to 178 (MLSHLYLSCNELSSFSFNHLH), and 184 to 207 (RLRTLDLSSNWLKHISIPELAALP). Asn-107 carries N-linked (GlcNAc...) asparagine glycosylation. Asn-142 carries an N-linked (GlcNAc...) asparagine glycan. The LRRCT domain occupies 219–275 (NPLPCDCSLYHLLRRWHQRGLSALHDFEREYTCLVFKVSESRVRFFEHSRVFKNCSV). Intrachain disulfides connect Cys-223/Cys-251, Cys-225/Cys-273, and Cys-300/Cys-352. N-linked (GlcNAc...) asparagine glycosylation is found at Asn-272, Asn-301, Asn-362, and Asn-368. The region spanning 279 to 370 (PGLELPEEQL…HNQTLEYNVS (92 aa)) is the Ig-like C2-type domain. Residues 384 to 404 (GFTTLLGCIVGLVLVLLYLFA) traverse the membrane as a helical segment. Over 405 to 508 (PPCRGCCHCC…STGSEGLVMS (104 aa)) the chain is Cytoplasmic.

It belongs to the immunoglobulin superfamily. AMIGO family. Binds AMIGO1 or AMIGO2. In terms of tissue distribution, ubiquitous.

It is found in the membrane. In terms of biological role, may mediate heterophilic cell-cell interaction. May contribute to signal transduction through its intracellular domain. In Mus musculus (Mouse), this protein is Amphoterin-induced protein 3.